We begin with the raw amino-acid sequence, 373 residues long: STE20-related kinase adapter protein alpha (373 aa).

Residues 11–321 (YELLTVIGKG…ASTLLNHSFF (311 aa)) form the Protein kinase domain. Over residues 255 to 281 (STSRSAANSGLSESLAPSTPRTSNGDS) the composition is skewed to polar residues. A disordered region spans residues 255–288 (STSRSAANSGLSESLAPSTPRTSNGDSPSHPYHR). The residue at position 361 (Thr361) is a Phosphothreonine; by LKB1.

Belongs to the protein kinase superfamily. STE Ser/Thr protein kinase family. STE20 subfamily. As to quaternary structure, component of a trimeric complex composed of STK11/LKB1, STRAD (STRADA or STRADB) and CAB39/MO25 (CAB39/MO25alpha or CAB39L/MO25beta): the complex tethers STK11/LKB1 in the cytoplasm and stimulates its catalytic activity.

Its subcellular location is the nucleus. It is found in the cytoplasm. Pseudokinase which, in complex with CAB39/MO25 (CAB39/MO25alpha or CAB39L/MO25beta), binds to and activates STK11/LKB1. Adopts a closed conformation typical of active protein kinases and binds STK11/LKB1 as a pseudosubstrate, promoting conformational change of STK11/LKB1 in an active conformation. This chain is STE20-related kinase adapter protein alpha (STRADA), found in Bos taurus (Bovine).